Consider the following 119-residue polypeptide: uncharacterized protein (119 aa).

The next 2 membrane-spanning stretches (helical) occupy residues 57–77 (FSHHLSILQSMCLHFIISILF) and 80–100 (YIFVFLFAFLLPSAFPLFILH).

It localises to the membrane. This is an uncharacterized protein from Saccharomyces cerevisiae (strain ATCC 204508 / S288c) (Baker's yeast).